The chain runs to 524 residues: Maturase K (524 aa).

It belongs to the intron maturase 2 family. MatK subfamily.

Its subcellular location is the plastid. The protein localises to the chloroplast. Its function is as follows. Usually encoded in the trnK tRNA gene intron. Probably assists in splicing its own and other chloroplast group II introns. The protein is Maturase K of Welwitschia mirabilis (Tree tumbo).